The primary structure comprises 315 residues: Ribosomal RNA small subunit methyltransferase H (315 aa).

S-adenosyl-L-methionine is bound by residues 35-37 (AGH), aspartate 55, phenylalanine 84, aspartate 105, and glutamine 112.

This sequence belongs to the methyltransferase superfamily. RsmH family.

The protein localises to the cytoplasm. The enzyme catalyses cytidine(1402) in 16S rRNA + S-adenosyl-L-methionine = N(4)-methylcytidine(1402) in 16S rRNA + S-adenosyl-L-homocysteine + H(+). Specifically methylates the N4 position of cytidine in position 1402 (C1402) of 16S rRNA. This chain is Ribosomal RNA small subunit methyltransferase H, found in Streptococcus agalactiae serotype Ia (strain ATCC 27591 / A909 / CDC SS700).